Reading from the N-terminus, the 507-residue chain is Phosphoprotein (507 aa).

A disordered region spans residues 56-79 (DHQDISKPCFPAAGPGKSSMSRCH). A phosphoserine mark is found at Ser86 and Ser151. A compositionally biased stretch (acidic residues) spans 137 to 160 (DGVEVWGGDEESENSDVDSGEPDP). The tract at residues 137 to 307 (DGVEVWGGDE…QSNIEPEDDY (171 aa)) is disordered. 2 stretches are compositionally biased toward basic and acidic residues: residues 189–199 (EIQKLLEDQSR) and 222–233 (TASEKPIKKGTD). 2 stretches are compositionally biased toward low complexity: residues 236–252 (STSS…GGAT) and 266–278 (NASA…SASN). Positions 279 to 301 (VSPTQGSKTESGTTTSRISQSNI) are enriched in polar residues. The multimerization stretch occupies residues 304–376 (EDDYDDELFS…LSSFMIAIPG (73 aa)). The interaction with the nucleocapsid (N-RNA) stretch occupies residues 459–507 (ASRSVIRSIIKSSHLGEDRKDYLMSLLNDIQGSKDLAQFHQMLVKILKN).

Belongs to the morbillivirus P protein family. Homotetramer. Interacts (via multimerization domain) with polymerase L; this interaction forms the polymerase L-P complex. Interacts (via N-terminus) with N0 (via Ncore); this interaction allows P to chaperon N0 to avoid N polymerization before encapsidation. Interacts (via C-terminus) with N-RNA template; this interaction positions the polymerase on the template for both transcription and replication. Post-translationally, phosphorylation on serines by host CK2 is necessary for the formation of viral factories.

Essential cofactor of the RNA polymerase L that plays a central role in the transcription and replication by forming the polymerase complex with RNA polymerase L and recruiting L to the genomic N-RNA template for RNA synthesis. Also plays a central role in the encapsidation of nascent RNA chains by forming the encapsidation complex with the nucleocapsid protein N (N-P complex). Acts as a chaperone for newly synthesized free N protein, so-called N0, allowing encapsidation of nascent RNA chains during replication. The nucleoprotein protein N prevents excessive phosphorylation of P, which leads to down-regulation of viral transcription/ replication. Participates, together with N, in the formation of viral factories (viroplasms), which are large inclusions in the host cytoplasm where replication takes place. This is Phosphoprotein (P/V) from Bos indicus (Zebu).